We begin with the raw amino-acid sequence, 602 residues long: Elongation factor 4 (602 aa).

One can recognise a tr-type G domain in the interval 8–189 (KNIRNFSIIA…KIITTIPAPS (182 aa)). GTP is bound by residues 20–25 (DHGKST) and 136–139 (NKID).

It belongs to the TRAFAC class translation factor GTPase superfamily. Classic translation factor GTPase family. LepA subfamily.

It localises to the cell inner membrane. The enzyme catalyses GTP + H2O = GDP + phosphate + H(+). Its function is as follows. Required for accurate and efficient protein synthesis under certain stress conditions. May act as a fidelity factor of the translation reaction, by catalyzing a one-codon backward translocation of tRNAs on improperly translocated ribosomes. Back-translocation proceeds from a post-translocation (POST) complex to a pre-translocation (PRE) complex, thus giving elongation factor G a second chance to translocate the tRNAs correctly. Binds to ribosomes in a GTP-dependent manner. The chain is Elongation factor 4 from Helicobacter pylori (strain Shi470).